Reading from the N-terminus, the 708-residue chain is Ion-translocating oxidoreductase complex subunit C (708 aa).

4Fe-4S ferredoxin-type domains lie at 369–397 (GEPQ…QQLY) and 407–436 (KATT…VQYF). Cysteine 377, cysteine 380, cysteine 383, cysteine 387, cysteine 416, cysteine 419, cysteine 422, and cysteine 426 together coordinate [4Fe-4S] cluster. Residues 663–684 (KARKLEQQQTNAEPEEQVDPRK) form a disordered region.

Belongs to the 4Fe4S bacterial-type ferredoxin family. RnfC subfamily. In terms of assembly, the complex is composed of six subunits: RsxA, RsxB, RsxC, RsxD, RsxE and RsxG. Requires [4Fe-4S] cluster as cofactor.

The protein localises to the cell inner membrane. Its function is as follows. Part of a membrane-bound complex that couples electron transfer with translocation of ions across the membrane. Required to maintain the reduced state of SoxR. This is Ion-translocating oxidoreductase complex subunit C from Shigella boydii serotype 18 (strain CDC 3083-94 / BS512).